The sequence spans 373 residues: Anhydro-N-acetylmuramic acid kinase (373 aa).

12-19 (GTSLDGVD) lines the ATP pocket.

This sequence belongs to the anhydro-N-acetylmuramic acid kinase family.

It catalyses the reaction 1,6-anhydro-N-acetyl-beta-muramate + ATP + H2O = N-acetyl-D-muramate 6-phosphate + ADP + H(+). It functions in the pathway amino-sugar metabolism; 1,6-anhydro-N-acetylmuramate degradation. The protein operates within cell wall biogenesis; peptidoglycan recycling. Functionally, catalyzes the specific phosphorylation of 1,6-anhydro-N-acetylmuramic acid (anhMurNAc) with the simultaneous cleavage of the 1,6-anhydro ring, generating MurNAc-6-P. Is required for the utilization of anhMurNAc either imported from the medium or derived from its own cell wall murein, and thus plays a role in cell wall recycling. The protein is Anhydro-N-acetylmuramic acid kinase of Salmonella gallinarum (strain 287/91 / NCTC 13346).